We begin with the raw amino-acid sequence, 1172 residues long: MGLHLTVPGLRRDGRGVQSNSHDTSSKTTADISRCPQHTDAGLQRAATPGISRLLGISSRSVTLTKPRSATRGNSRYHWVPAAAGWTVGVIATLSLLASVSPLIRWIIKVPREFINDYLFNFPDTNFAWSFVLALLAAALTARKRIAWLVLLANMVLAAVVNAAEIAAGGNTAAESFGENLGFAVHVVAIVVLVLGYREFWAKVRRGALFRAAAVWLAGAVVGIVASWGLVELFPGSLAPDERLGYAANRVVGFALADPDLFTGRPHVFLNAIFGLFGAFALIGAAIVLFLSQRADNALTGEDESAIRGLLDLYGKDDSLGYFATRRDKSVVFASSGRACITYRVEVGVCLASGDPVGDHRAWPQAVDAWLRLCQTYGWAPGVMGASSQGAQTYREAGLTALELGDEAILRPADFKLSGPEMRGVRQAVTRARRAGLTVRIRRHRDIAEDEMAQTITRADSWRDTETERGFSMALGRLGDPADSDCLLVEAIDPHNQVLAMLSLVPWGTTGVSLDLMRRSPQSPNGTIELMVSELALHAESLGITRISLNFAVFRAAFEQGAQLGAGPVARLWRGLLVFFSRWWQLETLYRSNMKYQPEWVPRYACYEDARVIPRVGVASVIAEGFLVLPFSRRNRVHTGHHPAVPERLAATGLLHHDGSAPDVSGLRQVGLTNGDGVERRLPEQVRVRFDKLEKLRSSGIDAFPVGRPPSHTVAQALAADHQASVSVSGRIMRIRNYGGVLFAQLRDWSGEMQVLLDNSRLDQGCAADFNAATDLGDLVEMTGHMGASKTGTPSLIVSGWRLIGKCLRPLPNKWKGLLDPEARVRTRYLDLAVNAESRALITARSSVLRAVRETLFAKGFVEVETPILQQLHGGATARPFVTHINTYSMDLFLRIAPELYLKRLCVGGVERVFELGRAFRNEGVDFSHNPEFTLLEAYQAHAGYLEWIDGCRELIQNAAQAANGAPIAMRPRTDKGSDGTRHHLEPVDISGIWPVRTVHDAISEALGERIDADTGLTTLRKLCDAAGVPYRTQWDAGAVVLELYEHLVECRTEQPTFYIDFPTSVSPLTRPHRSKRGVAERWDLVAWGIELGTAYSELTDPVEQRRRLQEQSLLAAGGDPEAMELDEDFLQAMEYAMPPTGGLGMGIDRVVMLITGRSIRETLPFPLAKPH.

The segment at 1-34 (MGLHLTVPGLRRDGRGVQSNSHDTSSKTTADISR) is disordered. The segment at 1-663 (MGLHLTVPGL…LLHHDGSAPD (663 aa)) is phosphatidylglycerol lysyltransferase. Over residues 17–31 (VQSNSHDTSSKTTAD) the composition is skewed to polar residues. Helical transmembrane passes span 80–100 (VPAA…LASV), 122–142 (FPDT…ALTA), 146–166 (IAWL…AAEI), 177–197 (FGEN…VLGY), 214–234 (AVWL…VELF), 272–292 (AIFG…LFLS), and 612–632 (VIPR…LPFS). The tract at residues 664–1172 (VSGLRQVGLT…TLPFPLAKPH (509 aa)) is lysine--tRNA ligase. Positions 726–804 (VSVSGRIMRI…SLIVSGWRLI (79 aa)) form a DNA-binding region, OB. 2 residues coordinate Mg(2+): D1084 and E1091.

In the N-terminal section; belongs to the LPG synthetase family. It in the C-terminal section; belongs to the class-II aminoacyl-tRNA synthetase family. Requires Mg(2+) as cofactor.

Its subcellular location is the cell membrane. It carries out the reaction tRNA(Lys) + L-lysine + ATP = L-lysyl-tRNA(Lys) + AMP + diphosphate. The enzyme catalyses L-lysyl-tRNA(Lys) + a 1,2-diacyl-sn-glycero-3-phospho-(1'-sn-glycerol) = a 1,2-diacyl-sn-glycero-3-phospho-1'-(3'-O-L-lysyl)-sn-glycerol + tRNA(Lys). In terms of biological role, catalyzes the production of L-lysyl-tRNA(Lys)transfer and the transfer of a lysyl group from L-lysyl-tRNA(Lys) to membrane-bound phosphatidylglycerol (PG), which produces lysylphosphatidylglycerol (LPG), one of the components of the bacterial membrane with a positive net charge. LPG synthesis contributes to the resistance to cationic antimicrobial peptides (CAMPs) and likely protects M.tuberculosis against the CAMPs produced by competiting microorganisms (bacteriocins). In fact, the modification of anionic phosphatidylglycerol with positively charged L-lysine results in repulsion of the peptides. This chain is Lysylphosphatidylglycerol biosynthesis bifunctional protein LysX (lysX), found in Mycobacterium bovis (strain ATCC BAA-935 / AF2122/97).